The sequence spans 1516 residues: Lysine-specific demethylase 5C (1516 aa).

The 42-residue stretch at 14–55 (CPVFEPSWAEFRDPLGYIAKIRPIAEKSGICKIRPPADWQPP) folds into the JmjN domain. An ARID domain is found at 24 to 128 (FRDPLGYIAK…IVYPYEMYQS (105 aa)). Over residues 142–151 (NEEKDKEYKP) the composition is skewed to basic and acidic residues. Residues 142–186 (NEEKDKEYKPHSIPLRQSVQPSKFNSYGRRAKRLQPDPEPTEEDI) are disordered. Residues 156-166 (LRQSVQPSKFN) show a composition bias toward polar residues. Residues K164, K188, K203, and K233 each participate in a glycyl lysine isopeptide (Lys-Gly) (interchain with G-Cter in SUMO2) cross-link. The segment at 216-262 (LRKKDKEGPECPPTVVVKEESGGDVKVESTSPKTFLESKEELSHSPE) is disordered. Residues 232-242 (VKEESGGDVKV) are compositionally biased toward basic and acidic residues. The residue at position 246 (S246) is a Phosphoserine. K254 is covalently cross-linked (Glycyl lysine isopeptide (Lys-Gly) (interchain with G-Cter in SUMO2)). 2 positions are modified to phosphoserine: S260 and S276. Residues 283 to 333 (SYVCRMCSRGDEDDKLLLCDGCDDNYHIFCLLPPLPEIPKGVWRCPKCVMA) form a PHD-type 1 zinc finger. A 2-oxoglutarate-binding site is contributed by Y399. In terms of domain architecture, JmjC spans 427–593 (EYATSGWNLN…AGRQCIEHYR (167 aa)). H473 and E475 together coordinate Fe cation. Residues S481, N483, and K491 each coordinate 2-oxoglutarate. Fe cation is bound at residue H561. The segment at 666–718 (CIKCKTTCFLSALACYDCPDGLVCLSHINDLCKCSSSRQYLRYRYTLDELPAM) adopts a C5HC2 zinc-finger fold. Phosphoserine occurs at positions 852 and 856. K1086 participates in a covalent cross-link: Glycyl lysine isopeptide (Lys-Gly) (interchain with G-Cter in SUMO2). The segment at 1144–1209 (TSICVCGQVP…KFLCPLCMRS (66 aa)) adopts a PHD-type 2 zinc-finger fold. The disordered stretch occupies residues 1274–1305 (LQAEPRPEEPPTYPSTPAFDPLREGSGKDMPK). The segment covering 1294-1304 (PLREGSGKDMP) has biased composition (basic and acidic residues). The residue at position 1318 (S1318) is a Phosphoserine. Positions 1400 to 1516 (ERHGSRARGR…CPQQPPQQQL (117 aa)) are disordered. Basic residues predominate over residues 1404 to 1419 (SRARGRALERRRRRKV). Over residues 1420–1437 (DRGGEGDDPAREELEPKR) the composition is skewed to basic and acidic residues. Residues 1444–1459 (EAEEAHEEEELEEETG) are compositionally biased toward acidic residues. Composition is skewed to polar residues over residues 1471–1481 (GSPSTQENQNG) and 1489–1500 (SSGSSVPFSTLT).

The protein belongs to the JARID1 histone demethylase family. Part of two distinct complexes, one containing E2F6, and the other containing REST. Interacts with ZMYND8. Requires Fe(2+) as cofactor.

The protein localises to the nucleus. The enzyme catalyses N(6),N(6),N(6)-trimethyl-L-lysyl(4)-[histone H3] + 3 2-oxoglutarate + 3 O2 = L-lysyl(4)-[histone H3] + 3 formaldehyde + 3 succinate + 3 CO2. Its function is as follows. Histone demethylase that specifically demethylates 'Lys-4' of histone H3, thereby playing a central role in histone code. Does not demethylate histone H3 'Lys-9', H3 'Lys-27', H3 'Lys-36', H3 'Lys-79' or H4 'Lys-20'. Demethylates trimethylated and dimethylated but not monomethylated H3 'Lys-4'. Participates in transcriptional repression of neuronal genes by recruiting histone deacetylases and REST at neuron-restrictive silencer elements. The sequence is that of Lysine-specific demethylase 5C (KDM5C) from Sus scrofa (Pig).